The primary structure comprises 510 residues: Flavonoid 3',5'-hydroxylase (510 aa).

Residue cysteine 447 coordinates heme.

This sequence belongs to the cytochrome P450 family. Heme serves as cofactor.

It catalyses the reaction a 3',5'-unsubstituted flavanone + 2 reduced [NADPH--hemoprotein reductase] + 2 O2 = a 3',5'-dihydroxyflavanone + 2 oxidized [NADPH--hemoprotein reductase] + 2 H2O + 2 H(+). Its pathway is pigment biosynthesis; anthocyanin biosynthesis. In terms of biological role, catalyzes the 3'5'-hydroxylation of naringenin and eriodictyol to form 5,7,3,'4',5'-pentahydroxyflavanone and 3',5'-hydroxylation of dihydrokaempferol and dihydroquercetin to form dihydromyricetin. This Eustoma exaltatum subsp. russellianum (Bluebells) protein is Flavonoid 3',5'-hydroxylase (CYP75A5).